The chain runs to 349 residues: Very-long-chain 3-oxoacyl-CoA reductase (349 aa).

Residues 19-39 (AIIFALLLGVFKLTVFSLKFA) traverse the membrane as a helical segment. Positions 65, 119, 146, 221, 225, 254, and 256 each coordinate NADP(+). Tyr-221 serves as the catalytic Proton donor. Lys-225 acts as the Lowers pKa of active site Tyr in catalysis.

This sequence belongs to the short-chain dehydrogenases/reductases (SDR) family.

It localises to the endoplasmic reticulum membrane. It catalyses the reaction a very-long-chain (3R)-3-hydroxyacyl-CoA + NADP(+) = a very-long-chain 3-oxoacyl-CoA + NADPH + H(+). It functions in the pathway lipid metabolism; fatty acid biosynthesis. Component of the microsomal membrane bound fatty acid elongation system, which produces the 26-carbon very long-chain fatty acids (VLCFA) from palmitate. Catalyzes the reduction of the 3-ketoacyl-CoA intermediate that is formed in each cycle of fatty acid elongation. VLCFAs serve as precursors for ceramide and sphingolipids. The polypeptide is Very-long-chain 3-oxoacyl-CoA reductase (Candida albicans (strain SC5314 / ATCC MYA-2876) (Yeast)).